Consider the following 1523-residue polypeptide: WD repeat-containing protein 62 (1523 aa).

Residue Ala-2 is modified to N-acetylalanine. Ser-33 carries the post-translational modification Phosphoserine. A Phosphothreonine modification is found at Thr-46. 12 WD repeats span residues 109–150 (TTRK…QVAE), 153–194 (GHKY…VVAS), 196–234 (KVSCRVIALSFSEDSSYFVTVGNRHVRFWFLEASTEAKV), 291–330 (INLKVSLSSCLCVSDELIFCGCTDGIVRIFQAHSLLYLTN), 357–396 (AVYPDTVALTFDPVHQWLSCVYKDHSIYIWDVKDIDEVSK), 411–450 (EVYPEFEDQRACLPSGTFLTCSSDNTIRFWNLDSASDTRW), 490–529 (DMKAGVRVMQVSPDGQHLASGDRSGNLRIHELHFMDELIK), 532–574 (AHDA…NLEQ), 578–618 (DHSS…DGLH), 626–665 (AEKTTLYDMDIDITQKYVAVACQDRNVRVYNTVSGKQKKC), 671–713 (GDEG…KMFG), and 714–752 (HSEIVTGMKFTYDCRHLITVSGDSCVFIWHLGPEITTCM). Phosphoserine is present on Ser-501. Positions 762–824 (QEQQQQPKDQ…PSKDSLDPDP (63 aa)) are disordered. Positions 776–790 (PPSQETYASTPSEIR) are enriched in polar residues. Acidic residues predominate over residues 797–809 (QTEDEMEEECEPE). One copy of the WD 13 repeat lies at 803–846 (EEECEPEELLKTPSKDSLDPDPRCLLTNGKLPLWAKRLLGDDDV). Residues 810–824 (ELLKTPSKDSLDPDP) are compositionally biased toward basic and acidic residues. A phosphoserine mark is found at Ser-966 and Ser-972. Residues 1000–1072 (VSSVSSKDQS…GLGNGSLPQT (73 aa)) are disordered. Thr-1072 bears the Phosphothreonine mark. A phosphoserine mark is found at Ser-1117, Ser-1143, and Ser-1169. The disordered stretch occupies residues 1143–1258 (SPEAQPVGQG…SLHKPLSPGQ (116 aa)). Composition is skewed to polar residues over residues 1167 to 1177 (YMSSDGTNVLS) and 1199 to 1213 (TSVLTTGREQSISAP). The span at 1214 to 1225 (SSCSYLESTTSS) shows a compositional bias: low complexity. Over residues 1226–1235 (HAKTTRSISL) the composition is skewed to polar residues. Ser-1234 is subject to Phosphoserine.

In terms of assembly, can form homodimers (via C-terminus). Interacts (via C-terminus) with MAPKBP1 (via C-terminus). Interacts with CDK5RAP2, CEP152, CEP63 and KIAA0753. CEP63, CDK5RAP2, CEP152, WDR62 are proposed to form a stepwise assembled complex at the centrosome forming a ring near parental centrioles. As to expression, prominent in neural crest lineages from 9.5 dpc to 11.5 dpc. Also expressed in the ventricular and subventricular zones during the period of cerebral cortical neurogenesis (11.5-16.5 dpc), with expression decreasing in intensity by 17.5 dpc. In the cerebellum, it is strongly expressed in precursors of granule neurons at late embryonic and early postnatal stages; by postnatal day 9 (P9). Present in fetal brain, enriched within the ventricular and subventricular zone (at protein level).

The protein localises to the nucleus. The protein resides in the cytoplasm. Its subcellular location is the cytoskeleton. It is found in the spindle pole. It localises to the microtubule organizing center. The protein localises to the centrosome. The protein resides in the centriole. Required for cerebral cortical development. Plays a role in neuronal proliferation and migration. Plays a role in mother-centriole-dependent centriole duplication; the function seems also to involve CEP152, CDK5RAP2 and CEP63 through a stepwise assembled complex at the centrosome that recruits CDK2 required for centriole duplication. The polypeptide is WD repeat-containing protein 62 (Wdr62) (Mus musculus (Mouse)).